A 152-amino-acid chain; its full sequence is D-erythrulose-4-phosphate isomerase (152 aa).

Cysteine 67 acts as the Proton acceptor in catalysis.

It belongs to the LacAB/RpiB family.

It catalyses the reaction D-erythrulose 4-phosphate = D-erythrose 4-phosphate. The protein operates within carbohydrate metabolism. Its function is as follows. Involved in catabolism of D-apiose. Catalyzes the isomerization of D-erythrulose 4-phosphate to D-erythrose 4-phosphate. In Pectobacterium atrosepticum (strain SCRI 1043 / ATCC BAA-672) (Erwinia carotovora subsp. atroseptica), this protein is D-erythrulose-4-phosphate isomerase.